The chain runs to 603 residues: Golgin subfamily A member 8B (603 aa).

Disordered regions lie at residues 1-82 (MAEE…NSRS), 95-125 (LKQQ…ELEG), 398-419 (TSAE…ESSG), and 460-492 (PGDS…GAAG). Positions 46-66 (AASGGCHSSEASSSASSSLHA) are enriched in low complexity. A compositionally biased stretch (polar residues) spans 69–82 (SPCQEQAAVLNSRS). 2 coiled-coil regions span residues 82-173 (SIKI…GELE) and 212-440 (LKGH…LELG). Basic and acidic residues predominate over residues 100–124 (KQVEHQLEEEKKANNEKQKAERELE). A compositionally biased stretch (gly residues) spans 469-482 (PGGGHHQAGPGQGG). The tract at residues 491-603 (AGDGVAACGS…CWAWLPRRRR (113 aa)) is golgi-targeting domain.

It belongs to the GOLGA8 family. As to expression, highly expressed in brain, heart and kidney. Detected at lower levels in liver, thymus, spleen, lung and peripheral blood leukocytes.

It is found in the golgi apparatus. The protein resides in the golgi stack membrane. Functionally, may be involved in maintaining Golgi structure. The chain is Golgin subfamily A member 8B (GOLGA8B) from Homo sapiens (Human).